The following is a 490-amino-acid chain: Protein nucleotidyltransferase YdiU (490 aa).

Gly-89, Gly-91, Arg-92, Lys-112, Asp-124, Gly-125, Arg-175, and Arg-182 together coordinate ATP. The active-site Proton acceptor is the Asp-251. Positions 252 and 261 each coordinate Mg(2+). Asp-261 serves as a coordination point for ATP.

The protein belongs to the SELO family. It depends on Mg(2+) as a cofactor. The cofactor is Mn(2+).

It catalyses the reaction L-seryl-[protein] + ATP = 3-O-(5'-adenylyl)-L-seryl-[protein] + diphosphate. It carries out the reaction L-threonyl-[protein] + ATP = 3-O-(5'-adenylyl)-L-threonyl-[protein] + diphosphate. The enzyme catalyses L-tyrosyl-[protein] + ATP = O-(5'-adenylyl)-L-tyrosyl-[protein] + diphosphate. The catalysed reaction is L-histidyl-[protein] + UTP = N(tele)-(5'-uridylyl)-L-histidyl-[protein] + diphosphate. It catalyses the reaction L-seryl-[protein] + UTP = O-(5'-uridylyl)-L-seryl-[protein] + diphosphate. It carries out the reaction L-tyrosyl-[protein] + UTP = O-(5'-uridylyl)-L-tyrosyl-[protein] + diphosphate. Its function is as follows. Nucleotidyltransferase involved in the post-translational modification of proteins. It can catalyze the addition of adenosine monophosphate (AMP) or uridine monophosphate (UMP) to a protein, resulting in modifications known as AMPylation and UMPylation. The polypeptide is Protein nucleotidyltransferase YdiU (Vibrio vulnificus (strain CMCP6)).